The following is a 676-amino-acid chain: Basic proline-rich protein (676 aa).

A signal peptide spans 1–16 (MLPILLSVALLALSSA). Serine 28 and serine 30 each carry phosphoserine. The segment at 29-676 (NSAEKFLRPP…PRPPPGPPPQ (648 aa)) is disordered. Composition is skewed to pro residues over residues 36 to 50 (RPPP…PPPE), 71 to 424 (GPAP…PPAD), and 442 to 676 (PPPA…PPPQ). The propeptide occupies 409–457 (APPGARPPPPPPPPADEPQQGPAPSGDKPKKKPPPPAGPPPPGPPSPGP).

In terms of tissue distribution, acinar cells and secretory granules of the parotid gland.

The protein localises to the secreted. In terms of biological role, the parotid hormone stimulates dentinal fluid transport in teeth. In Sus scrofa (Pig), this protein is Basic proline-rich protein.